The following is a 72-amino-acid chain: Translation initiation factor IF-1 1 (72 aa).

The 72-residue stretch at 1 to 72 (MSKEDVIQMQ…TKGRIVFRAK (72 aa)) folds into the S1-like domain.

The protein belongs to the IF-1 family. In terms of assembly, component of the 30S ribosomal translation pre-initiation complex which assembles on the 30S ribosome in the order IF-2 and IF-3, IF-1 and N-formylmethionyl-tRNA(fMet); mRNA recruitment can occur at any time during PIC assembly.

Its subcellular location is the cytoplasm. In terms of biological role, one of the essential components for the initiation of protein synthesis. Stabilizes the binding of IF-2 and IF-3 on the 30S subunit to which N-formylmethionyl-tRNA(fMet) subsequently binds. Helps modulate mRNA selection, yielding the 30S pre-initiation complex (PIC). Upon addition of the 50S ribosomal subunit IF-1, IF-2 and IF-3 are released leaving the mature 70S translation initiation complex. The protein is Translation initiation factor IF-1 1 of Thiobacillus denitrificans (strain ATCC 25259 / T1).